The following is a 171-amino-acid chain: Large ribosomal subunit protein bL9 (171 aa).

Belongs to the bacterial ribosomal protein bL9 family.

Functionally, binds to the 23S rRNA. The chain is Large ribosomal subunit protein bL9 from Rickettsia prowazekii (strain Madrid E).